We begin with the raw amino-acid sequence, 587 residues long: Vesicular glutamate transporter 2.2 (587 aa).

The Cytoplasmic segment spans residues 1–71 (MDTVKERVLA…CTCFGLPRRY (71 aa)). A helical transmembrane segment spans residues 72–92 (IIAIMSGLGFCISFGIRCNLG). Over 93 to 125 (VAIVDMVNNSTIHKGGKIIIKGKAKFNWDPETV) the chain is Vesicular. 2 N-linked (GlcNAc...) asparagine glycosylation sites follow: Asn-100 and Asn-101. Residues 126-146 (GMIHGSFFWGYTVTQIPGGYI) traverse the membrane as a helical segment. The Cytoplasmic segment spans residues 147-149 (SSR). A helical transmembrane segment spans residues 150–170 (LAANRVFGAAILLTSTLNMFI). The Vesicular portion of the chain corresponds to 171-180 (PSAARVHYGC). The helical transmembrane segment at 181–203 (VMFVRILQGLVEGVTYPACHGIW) threads the bilayer. Over 204–217 (SKWAPPLERSRLAT) the chain is Cytoplasmic. A helical membrane pass occupies residues 218 to 238 (TSFCGSYAGAVVAMPLAGILV). The Vesicular portion of the chain corresponds to 239–245 (QYSGWSS). Residues 246–266 (VFYIYGSFGIVWYMFWILVSY) traverse the membrane as a helical segment. The Cytoplasmic segment spans residues 267-311 (ESPADHPTITDEERTYIEESIGESAKLLGAMEKYKTPWRKFFTSM). The chain crosses the membrane as a helical span at residues 312–332 (PVYAIIVANFCRSWTFYLLLI). The Vesicular segment spans residues 333–350 (SQPAYFEEVFGFEISKVG). A helical transmembrane segment spans residues 351–371 (MVSALPHLVMTIIVPIGGQLA). Residues 372 to 387 (DYLRSKNILTTTTVRK) lie on the Cytoplasmic side of the membrane. The helical transmembrane segment at 388–408 (IMNCGGFGMEATLLLVVGFSH) threads the bilayer. Residues 409–410 (SK) lie on the Vesicular side of the membrane. Residues 411–431 (GVAISFLVLAVGFSGFAISGF) form a helical membrane-spanning segment. Residues 432–444 (NVNHLDIAPRYAS) are Cytoplasmic-facing. A helical membrane pass occupies residues 445-465 (ILMGISNGVGTLSGMVCPLIV). The Vesicular segment spans residues 466–479 (GAMTKNKTREEWQN). An N-linked (GlcNAc...) asparagine glycan is attached at Asn-471. A helical transmembrane segment spans residues 480 to 500 (VFLIASLVHYGGVIFYGIFAS). The Cytoplasmic segment spans residues 501–587 (GEKQPWADPE…ERTYTGDGYS (87 aa)).

It belongs to the major facilitator superfamily. Sodium/anion cotransporter family. VGLUT subfamily. As to expression, expressed in spinal cord.

The protein resides in the cytoplasmic vesicle. Its subcellular location is the secretory vesicle. The protein localises to the synaptic vesicle membrane. It is found in the membrane. It localises to the synapse. The protein resides in the synaptosome. Its subcellular location is the cell membrane. It catalyses the reaction L-glutamate(out) = L-glutamate(in). It carries out the reaction 3 Na(+)(out) + phosphate(out) = 3 Na(+)(in) + phosphate(in). The catalysed reaction is phosphate(in) = phosphate(out). The enzyme catalyses K(+)(in) + H(+)(out) = K(+)(out) + H(+)(in). It catalyses the reaction chloride(in) = chloride(out). With respect to regulation, chloride channel activity is allosterically activated by lumenal H(+) and Cl(-) leading to synaptic vesicles acidification. The L-glutamate transport activity is allosterically activated by lumenal H(+) and Cl(-). The allosteric requirement for H(+) efficiently prevents non-vesicular efflux across the plasma membrane. The L-glutamate uniporter activity exhibits a biphasic dependence on chloride concentration. Its function is as follows. Multifunctional transporter that transports L-glutamate as well as multiple ions such as chloride, proton, potassium, sodium and phosphate. At the synaptic vesicle membrane, mainly functions as a uniporter which transports preferentially L-glutamate but also, phosphate from the cytoplasm into synaptic vesicles at presynaptic nerve terminals of excitatory neural cells. The L-glutamate or phosphate uniporter activity is electrogenic and is driven by the proton electrochemical gradient, mainly by the electrical gradient established by the vacuolar H(+)-ATPase across the synaptic vesicle membrane. In addition, functions as a chloride channel that allows a chloride permeation through the synaptic vesicle membrane therefore affects the proton electrochemical gradient and promotes synaptic vesicles acidification. Moreover, functions as a vesicular K(+)/H(+) antiport allowing to maintain the electrical gradient and to decrease chemical gradient and therefore sustain vesicular L-glutamate uptake. The vesicular H(+)/H(+) antiport activity is electroneutral. At the plasma membrane, following exocytosis, functions as a symporter of Na(+) and phosphate from the extracellular space to the cytoplasm allowing synaptic phosphate homeostasis regulation. The symporter activity is driven by an inside negative membrane potential and is electrogenic. Also involved in the regulation of retinal hyaloid vessel regression during postnatal development. May also play a role in the endocrine L-glutamatergic system of other tissues such as pineal gland and pancreas. The chain is Vesicular glutamate transporter 2.2 (slc17a6a) from Danio rerio (Zebrafish).